A 324-amino-acid chain; its full sequence is MSLQIGRTERARSPVFVFAHKRQLLHGRCSTIDNANCSTCSMKINSTCTLTALPIAALPGPRTTSHYSTAAANWCYATVAPRARSSTIAASLGTPAPSSSASFRPKLIRTTPVQAAPVAPALMDAAVERLKTGFEKFKTEVYDKKPDFFEPLKAGQAPKYMVFACADSRVCPSVTLGLEPGEAFTIRNIANMVPAYCKNKYAGVGSAIEYAVCALKVEVIVVIGHSRCGGIKALLSLKDGADDSFHFVEDWVRIGFPAKKKVQTECASMPFDDQCTVLEKEAVNVSLQNLLTYPFVKEGVTNGTLKLVGGHYDFVSGKFETWEQ.

The protein belongs to the beta-class carbonic anhydrase family. As to quaternary structure, homohexamer.

It localises to the plastid. The protein localises to the chloroplast stroma. It catalyses the reaction hydrogencarbonate + H(+) = CO2 + H2O. Reversible hydration of carbon dioxide. In Hordeum vulgare (Barley), this protein is Carbonic anhydrase, chloroplastic.